We begin with the raw amino-acid sequence, 279 residues long: Borealin (279 aa).

A compositionally biased stretch (basic residues) spans 135-152; the sequence is KTKAKVAAKKPSTARKTR. The segment at 135-180 is disordered; the sequence is KTKAKVAAKKPSTARKTRASTANLTNTSKRTSKRGRATPSASKQIE. Residues 153-163 are compositionally biased toward polar residues; the sequence is ASTANLTNTSK.

Belongs to the borealin family. Component of the CPC at least composed of survivin/birc5, incenp, cdca8/borealin and/or cdca9/dasra-A, and aurkb/aurora-B. Interacts with incenp (via N-terminus).

It is found in the nucleus. Its subcellular location is the chromosome. The protein localises to the centromere. It localises to the cytoplasm. The protein resides in the cytoskeleton. It is found in the spindle. Component of the chromosomal passenger complex (CPC), a complex that acts as a key regulator of mitosis. The CPC complex has essential functions at the centromere in ensuring correct chromosome alignment and segregation and is required for chromatin-induced microtubule stabilization and spindle assembly. Contributes to CPC function by facilitating loading of the CPC onto chromosomes. The polypeptide is Borealin (cdca8) (Xenopus tropicalis (Western clawed frog)).